The following is a 277-amino-acid chain: Tumor necrosis factor receptor superfamily member 4 (277 aa).

An N-terminal signal peptide occupies residues 1 to 28 (MCVGARRLGRGPCAALLLLGLGLSTVTG). At 29–214 (LHCVGDTYPS…RPVEVPGGRA (186 aa)) the chain is on the extracellular side. TNFR-Cys repeat units lie at residues 30 to 65 (HCVG…TVCR) and 66 to 107 (PCGP…DTVC). Disulfide bonds link cysteine 31–cysteine 42, cysteine 43–cysteine 56, cysteine 46–cysteine 64, cysteine 67–cysteine 81, cysteine 84–cysteine 99, cysteine 87–cysteine 107, cysteine 109–cysteine 125, and cysteine 128–cysteine 141. The stretch at 108 to 126 (RCRAGTQPLDSYKPGVDCA) is one TNFR-Cys 3; truncated repeat. A TNFR-Cys 4 repeat occupies 127–167 (PCPPGHFSPGDNQACKPWTNCTLAGKHTLQPASNSSDAICE). Residues asparagine 146 and asparagine 160 are each glycosylated (N-linked (GlcNAc...) asparagine). The cysteines at positions 147 and 166 are disulfide-linked. The tract at residues 158–209 (ASNSSDAICEDRDPPATQPQETQGPPARPITVQPTEAWPRTSQGPSTRPVEV) is disordered. The helical transmembrane segment at 215–235 (VAAILGLGLVLGLLGPLAILL) threads the bilayer. At 236 to 277 (ALYLLRRDQRLPPDAHKPPGGGSFRTPIQEEQADAHSTLAKI) the chain is on the cytoplasmic side. Positions 248 to 277 (PDAHKPPGGGSFRTPIQEEQADAHSTLAKI) are disordered.

As to quaternary structure, interacts with TRAF2, TRAF3 and TRAF5. In terms of assembly, (Microbial infection) Interacts with Human herpesvirus 6B/HHV-6B gQ1:gQ2 proteins.

The protein resides in the membrane. Its function is as follows. Receptor for TNFSF4/OX40L/GP34. Is a costimulatory molecule implicated in long-term T-cell immunity. In terms of biological role, (Microbial infection) Acts as a receptor for human herpesvirus 6B/HHV-6B. The protein is Tumor necrosis factor receptor superfamily member 4 (TNFRSF4) of Homo sapiens (Human).